The chain runs to 263 residues: Putative inactive caspase B (263 aa).

The propeptide at 1 to 8 is removed in mature form by cps-1 or ced-3; that stretch reads MMCEDASD.

Belongs to the peptidase C14A family. In terms of assembly, interacts with ced-3 (via large subunit p17 or small subunit p13); the interaction inhibits ced-3 autoactivation. Post-translationally, cleavage by csp-1 isoform b or ced-3 removes the propeptide and generates subunit p31 in vitro. An additional cleavage at Asp-149 generates the 2 subunits p17 and p14 but this cleavage appears to be less efficient. In terms of tissue distribution, specifically expressed in the hermaphrodite germline.

It is found in the cytoplasm. Putative inactive caspase. In the germline, binds caspase ced-3 zymogen and prevents ced-3 autoactivation. Does not affect the caspase activity of mature ced-3 and ced-4-mediated mature ced-3 activation. Negatively regulates germline apoptosis by inhibiting autocleavage of caspase ced-3. Involved in fertility. Functionally, putative inactive caspase. Dispensable for the inhibition of germline apoptosis. The chain is Putative inactive caspase B from Caenorhabditis elegans.